A 355-amino-acid chain; its full sequence is Replication-associated protein (355 aa).

Residues 11 to 114 (SHRNANTFLT…PLAVFERGTF (104 aa)) form the CRESS-DNA virus Rep endonuclease domain. Residues 18-21 (FLTY) carry the RCR-1 motif. Residues Glu-52, His-60, and His-62 each coordinate a divalent metal cation. Positions 60–62 (HLH) match the RCR-2 motif. The For DNA cleavage activity role is filled by Tyr-100. The short motif at 100–103 (YILK) is the RCR-3 element. A divalent metal cation is bound at residue Glu-104. Positions 175–187 (SANKLFPEIQEEF) are oligomerization. Position 229-236 (229-236 (GPTRTGKS)) interacts with ATP. Residues 252–270 (VDWSSYNEDAIYNIVDDIP) form a transactivation region. Residues 292-303 (KYGKKKKVQKKS) carry the Nuclear localization signal motif.

Belongs to the geminiviridae Rep protein family. As to quaternary structure, homooligomer. Rep binds to repeated DNA motifs (iterons). Forms the O-complex, which is a Rep-DNA complex involved in the initiation of RCR. Part of the C- and V-complexes which are RepA-Rep-DNA complexes involved in the c-sense and v-sense transcription. Mg(2+) serves as cofactor. It depends on Mn(2+) as a cofactor.

The protein resides in the host nucleus. Its function is as follows. Essential for the replication of viral ssDNA. The closed circular ssDNA genome is first converted to a superhelical dsDNA. Rep binds a specific region at the genome origin of replication. It introduces an endonucleolytic nick within the conserved sequence 5'-TAATATTAC-3' in the intergenic region of the genome present in all geminiviruses, thereby initiating the rolling circle replication (RCR). Following cleavage, binds covalently to the 5'-phosphate of DNA as a tyrosyl ester. The cleavage gives rise to a free 3'-OH that serves as a primer for the cellular DNA polymerase. The polymerase synthesizes the (+) strand DNA by rolling circle mechanism. After one round of replication, a Rep-catalyzed nucleotidyl transfer reaction releases a circular single-stranded virus genome, thereby terminating the replication. Displays origin-specific DNA cleavage, nucleotidyl transferase, ATPase and helicase activities. Acts as an inhibitor of C-sense gene transcription. This is Replication-associated protein from Maize streak virus genotype A (isolate South Africa) (MSV).